A 152-amino-acid polypeptide reads, in one-letter code: Small ribosomal subunit protein uS15 (152 aa).

The segment covering 1–11 (MARMHARRRGK) has biased composition (basic residues). Residues 1 to 25 (MARMHARRRGKSSSVRPARNEAPAW) form a disordered region.

This sequence belongs to the universal ribosomal protein uS15 family. As to quaternary structure, part of the 30S ribosomal subunit.

In Methanoregula boonei (strain DSM 21154 / JCM 14090 / 6A8), this protein is Small ribosomal subunit protein uS15.